Consider the following 286-residue polypeptide: Glycine--tRNA ligase alpha subunit (286 aa).

The protein belongs to the class-II aminoacyl-tRNA synthetase family. Tetramer of two alpha and two beta subunits.

The protein resides in the cytoplasm. It carries out the reaction tRNA(Gly) + glycine + ATP = glycyl-tRNA(Gly) + AMP + diphosphate. This is Glycine--tRNA ligase alpha subunit (glyQ) from Thermotoga maritima (strain ATCC 43589 / DSM 3109 / JCM 10099 / NBRC 100826 / MSB8).